The primary structure comprises 203 residues: Putative 3-methyladenine DNA glycosylase (203 aa).

Belongs to the DNA glycosylase MPG family.

The protein is Putative 3-methyladenine DNA glycosylase of Clostridium botulinum (strain Langeland / NCTC 10281 / Type F).